The following is a 336-amino-acid chain: Protein-glutamate methylesterase/protein-glutamine glutaminase 2 (336 aa).

One can recognise a Response regulatory domain in the interval 2 to 119; that stretch reads KIAIVNDMPM…PNPKEAAAPL (118 aa). Asp-53 bears the 4-aspartylphosphate mark. The 190-residue stretch at 147 to 336 folds into the CheB-type methylesterase domain; the sequence is PSRRDRLVAI…APRLIEVFTQ (190 aa). Catalysis depends on residues Ser-159, His-186, and Asp-279.

It belongs to the CheB family. In terms of processing, phosphorylated by CheA. Phosphorylation of the N-terminal regulatory domain activates the methylesterase activity.

It localises to the cytoplasm. It catalyses the reaction [protein]-L-glutamate 5-O-methyl ester + H2O = L-glutamyl-[protein] + methanol + H(+). It carries out the reaction L-glutaminyl-[protein] + H2O = L-glutamyl-[protein] + NH4(+). In terms of biological role, involved in chemotaxis. Part of a chemotaxis signal transduction system that modulates chemotaxis in response to various stimuli. Catalyzes the demethylation of specific methylglutamate residues introduced into the chemoreceptors (methyl-accepting chemotaxis proteins or MCP) by CheR. Also mediates the irreversible deamidation of specific glutamine residues to glutamic acid. The protein is Protein-glutamate methylesterase/protein-glutamine glutaminase 2 of Pseudomonas syringae pv. syringae (strain B728a).